A 543-amino-acid polypeptide reads, in one-letter code: Vibriobactin-specific 2,3-dihydroxybenzoate-AMP ligase (543 aa).

The helical transmembrane segment at F240–L259 threads the bilayer.

Belongs to the ATP-dependent AMP-binding enzyme family.

The protein resides in the cell inner membrane. The enzyme catalyses 2,3-dihydroxybenzoate + holo-[ACP] + ATP = 2,3-dihydroxybenzoyl-[ACP] + AMP + diphosphate. It functions in the pathway siderophore biosynthesis; vibriobactin biosynthesis. Functionally, activation of the carboxylate group of 2,3-dihydroxy-benzoate (DHB), via ATP-dependent PPi exchange reactions, to the acyladenylate, preparing that molecule for the final stages of vibriobactin synthesis. This Vibrio cholerae serotype O1 (strain ATCC 39315 / El Tor Inaba N16961) protein is Vibriobactin-specific 2,3-dihydroxybenzoate-AMP ligase (vibE).